The primary structure comprises 517 residues: Splicing factor cactin (517 aa).

Positions 1-14 are enriched in basic and acidic residues; it reads MAFRDSTRDFNRSR. A disordered region spans residues 1–59; the sequence is MAFRDSTRDFNRSRPEKRHASRSSSPRSFRPSNQNARANYNLPRVRDAMKEEERSRETK. The span at 22 to 32 shows a compositional bias: low complexity; the sequence is RSSSPRSFRPS. The span at 44 to 59 shows a compositional bias: basic and acidic residues; the sequence is RVRDAMKEEERSRETK.

This sequence belongs to the CACTIN family. In terms of assembly, interacts with sde2. Interacts with cdc5.

Its function is as follows. Plays a role in pre-mRNA splicing by facilitating excision of introns featuring long spacing between the branchpoint and 3'-splice site (ss). Recruited to the spliceosome by sde2, which may enable folding of the RNA between the BP and 3'-ss to guide the splice site towards the spliceosome's catalytic center. Assists the splicing of several components involved in chromatin organization. In Schizosaccharomyces pombe (strain 972 / ATCC 24843) (Fission yeast), this protein is Splicing factor cactin.